We begin with the raw amino-acid sequence, 323 residues long: Putative CRISPR-associated protein SSO1401 (323 aa).

As to quaternary structure, sometimes seen associated with the aCascade ribonucleoprotein complex, minimally composed of Csa2 and Cas5a, which binds crRNA. Other probable components of aCascade in strain P1 are Cas6 and Csa5, while SSO1399, Cas5b (SSO1400) and SSO1401 have sometimes been seen weakly associated. The Csa2-Cas5a-crRNA complex also binds target DNA homologous to crRNA, probably forming an R-loop. Purified aCascade forms a filament about 6 nm in width.

CRISPR (clustered regularly interspaced short palindromic repeat) is an adaptive immune system that provides protection against mobile genetic elements (viruses, transposable elements and conjugative plasmids). CRISPR clusters contain spacers, sequences complementary to antecedent mobile elements, and target invading nucleic acids. CRISPR clusters are transcribed and processed into CRISPR RNA (crRNA). This Saccharolobus solfataricus (strain ATCC 35092 / DSM 1617 / JCM 11322 / P2) (Sulfolobus solfataricus) protein is Putative CRISPR-associated protein SSO1401.